We begin with the raw amino-acid sequence, 116 residues long: Nucleoid-associated protein P9301_00191 (116 aa).

This sequence belongs to the YbaB/EbfC family. Homodimer.

Its subcellular location is the cytoplasm. It localises to the nucleoid. In terms of biological role, binds to DNA and alters its conformation. May be involved in regulation of gene expression, nucleoid organization and DNA protection. This is Nucleoid-associated protein P9301_00191 from Prochlorococcus marinus (strain MIT 9301).